Reading from the N-terminus, the 414-residue chain is Ornithine aminotransferase (414 aa).

An intrachain disulfide couples cysteine 154 to cysteine 163. At lysine 262 the chain carries N6-(pyridoxal phosphate)lysine.

This sequence belongs to the class-III pyridoxal-phosphate-dependent aminotransferase family. As to quaternary structure, homodimer. It depends on pyridoxal 5'-phosphate as a cofactor. In terms of processing, the disulfide bond between Cys-154 and Cys-163 is reduced by TRX1 which increases OAT catalytic activity.

The protein resides in the cytoplasm. The enzyme catalyses a 2-oxocarboxylate + L-ornithine = L-glutamate 5-semialdehyde + an L-alpha-amino acid. The catalysed reaction is L-ornithine + 2-oxoglutarate = L-glutamate 5-semialdehyde + L-glutamate. It participates in amino-acid biosynthesis; L-proline biosynthesis; L-glutamate 5-semialdehyde from L-ornithine: step 1/1. With respect to regulation, unlike for mammalian OATs, activity is increased by TRX1-mediated reduction of the disulfide bond between Cys-154 and Cys-163. Binding to TRX1 may also induce conformational changes that facilitate substrate binding. Functionally, catalyzes the transamination of alpha-ketoglutarate with ornithine or N-acetylornithine and of glutamate-5-semialdehyde with glutamate and alanine. This Plasmodium yoelii yoelii protein is Ornithine aminotransferase.